Reading from the N-terminus, the 151-residue chain is Small ribosomal subunit protein uS13 (151 aa).

It belongs to the universal ribosomal protein uS13 family. Part of the 30S ribosomal subunit. Forms a loose heterodimer with protein S19. Forms two bridges to the 50S subunit in the 70S ribosome.

In terms of biological role, located at the top of the head of the 30S subunit, it contacts several helices of the 16S rRNA. In the 70S ribosome it contacts the 23S rRNA (bridge B1a) and protein L5 of the 50S subunit (bridge B1b), connecting the 2 subunits; these bridges are implicated in subunit movement. This chain is Small ribosomal subunit protein uS13, found in Staphylothermus marinus (strain ATCC 43588 / DSM 3639 / JCM 9404 / F1).